The sequence spans 663 residues: MNHAELRRLFAACDGNQSGRVEYEDFTTVCRELNVPADDIRTLFNKFDLDGDGYINFNDFSSSFQEVSEALNLASLGNCLHSQRRAWDEFENTLDGDVAFYLGRQWDALSELYEGIHSTSDELLLQQFEDLIRALVTEIREHRMESEQLETSLRRTEEVSSSQLAEMEEDLQQQLIHTERRVREEEQKKLDESIAMLQIKHENELADLQTTIERLTKQYQEESKLNTPREDSVKLRAQIKDLMEENEELRASLMKAQMNVSILQVELDKLKNAFTDQKRQHERESDDLKKMVMEFQSYSSHIEMLQEMNKSLYDSNDGLRSALSQENASTKRQLSPRNEVLPRKMKPIRQSTMNQSSFTNEEDTLALVKCWAEKYLDSGVSVQSEMDAMSGIDYDSDDSHHSVETVHHSYSCVPSELEVSEVKPEALRSVARSTVGSISSSLRRRLSAFPVKQNEEDLLDTQDLAPVYRLVLAGDAGSGKSSFLLRLSLNEFRGDIQTTLGVDFQIKKMLVDGEKTNLQIWDTAGQERFRSIARSYFRKAHGVLLLYDVTSESSFLNVREWVEQIRESTDEDIPMCIIGNKVDLRAARPEGSCVSSIHGEKLAMNYNALFCEASAKEGTNVIEAVLHLAREVKKHVKLGRRSESQVKLSLHKRRKTLSNCCGV.

EF-hand domains follow at residues 1–33 (MNHA…CREL) and 35–70 (VPAD…VSEA). Asp-14, Asn-16, Ser-18, Arg-20, Asp-25, Asp-48, Asp-50, Asp-52, Tyr-54, and Asp-59 together coordinate Ca(2+). A coiled-coil region spans residues 122–297 (ELLLQQFEDL…LKKMVMEFQS (176 aa)). Over residues 324 to 336 (SQENASTKRQLSP) the composition is skewed to polar residues. The tract at residues 324 to 343 (SQENASTKRQLSPRNEVLPR) is disordered. GTP-binding positions include 477–482 (GSGKSS), 580–583 (NKVD), and 615–616 (AK).

The protein belongs to the small GTPase superfamily. Rab family. As to quaternary structure, homodimer.

The protein resides in the cytoplasm. It localises to the perinuclear region. Functionally, binds predominantly GDP, and also GTP. The polypeptide is Ras and EF-hand domain-containing protein (rasef) (Danio rerio (Zebrafish)).